Reading from the N-terminus, the 544-residue chain is CTP synthase (544 aa).

Positions 1–267 are amidoligase domain; that stretch reads MAKFVFITGG…CREVLDVLDL (267 aa). Ser13 is a binding site for CTP. UTP is bound at residue Ser13. ATP is bound by residues 14-19 and Asp71; that span reads SIGKGI. Residues Asp71 and Glu141 each coordinate Mg(2+). CTP is bound by residues 148 to 150, 188 to 193, and Lys224; these read DIE and KTKPTQ. Residues 188–193 and Lys224 contribute to the UTP site; that span reads KTKPTQ. Residues 292–534 form the Glutamine amidotransferase type-1 domain; the sequence is KVALVGKYIQ…IEAAQQRLPS (243 aa). Gly354 is an L-glutamine binding site. Residue Cys381 is the Nucleophile; for glutamine hydrolysis of the active site. L-glutamine contacts are provided by residues 382-385, Glu405, and Arg462; that span reads LGMQ. Residues His507 and Glu509 contribute to the active site.

This sequence belongs to the CTP synthase family. As to quaternary structure, homotetramer.

It catalyses the reaction UTP + L-glutamine + ATP + H2O = CTP + L-glutamate + ADP + phosphate + 2 H(+). The catalysed reaction is L-glutamine + H2O = L-glutamate + NH4(+). It carries out the reaction UTP + NH4(+) + ATP = CTP + ADP + phosphate + 2 H(+). It participates in pyrimidine metabolism; CTP biosynthesis via de novo pathway; CTP from UDP: step 2/2. With respect to regulation, allosterically activated by GTP, when glutamine is the substrate; GTP has no effect on the reaction when ammonia is the substrate. The allosteric effector GTP functions by stabilizing the protein conformation that binds the tetrahedral intermediate(s) formed during glutamine hydrolysis. Inhibited by the product CTP, via allosteric rather than competitive inhibition. Catalyzes the ATP-dependent amination of UTP to CTP with either L-glutamine or ammonia as the source of nitrogen. Regulates intracellular CTP levels through interactions with the four ribonucleotide triphosphates. This is CTP synthase from Parasynechococcus marenigrum (strain WH8102).